A 189-amino-acid polypeptide reads, in one-letter code: Chitin synthase 1 (189 aa).

This sequence belongs to the chitin synthase family.

The protein localises to the cell membrane. The catalysed reaction is [(1-&gt;4)-N-acetyl-beta-D-glucosaminyl](n) + UDP-N-acetyl-alpha-D-glucosamine = [(1-&gt;4)-N-acetyl-beta-D-glucosaminyl](n+1) + UDP + H(+). Its function is as follows. Polymerizes chitin, a structural polymer of the cell wall and septum, by transferring the sugar moiety of UDP-GlcNAc to the non-reducing end of the growing chitin polymer. The protein is Chitin synthase 1 (CHS1) of Schizophyllum commune (Split gill fungus).